Here is a 185-residue protein sequence, read N- to C-terminus: Disulfide bond formation protein B (185 aa).

The Cytoplasmic segment spans residues 1–25 (MLLFFVILGIFVLTILKAISKQRWS). The helical transmembrane segment at 26 to 42 (WLLLAASALSLELSALY) threads the bilayer. The Periplasmic segment spans residues 43–60 (FQHVMQLEPCVMCVYERL). Cys52 and Cys55 are disulfide-bonded. Residues 61 to 76 (AMLGILLAGLIGASSP) traverse the membrane as a helical segment. Topologically, residues 77–83 (NNVFIRL) are cytoplasmic. Residues 84–101 (SAFLLWGISAVWGILLAI) traverse the membrane as a helical segment. Residues 102 to 156 (KHTDYQLHPSPFFTCDFFPNFPAWAPLHEWLPWLFNPTGDCSDIVWQFLGYSMPQ) are Periplasmic-facing. A disulfide bridge connects residues Cys116 and Cys142. A helical transmembrane segment spans residues 157-175 (WLIVSFSLYTLLFIIFAIS). The Cytoplasmic segment spans residues 176–185 (AVLKTKKQLF).

Belongs to the DsbB family.

It is found in the cell inner membrane. In terms of biological role, required for disulfide bond formation in some periplasmic proteins. Acts by oxidizing the DsbA protein. This chain is Disulfide bond formation protein B, found in Psychromonas ingrahamii (strain DSM 17664 / CCUG 51855 / 37).